The chain runs to 248 residues: Trypsin II-P29 (248 aa).

The first 16 residues, 1–16 (MKFLFLILSCLGAAVA), serve as a signal peptide directing secretion. A propeptide spans 17-25 (FPGGADDDK) (activation peptide). The Peptidase S1 domain occupies 26 to 246 (IVGGYTCPEH…YVDWIQETIA (221 aa)). 6 disulfides stabilise this stretch: C32–C162, C50–C66, C134–C235, C141–C208, C173–C187, and C198–C222. Catalysis depends on H65, which acts as the Charge relay system. Positions 77, 79, 82, and 87 each coordinate Ca(2+). D109 serves as the catalytic Charge relay system. The Charge relay system role is filled by S202.

This sequence belongs to the peptidase S1 family. It depends on Ca(2+) as a cofactor. High levels are seen in the pancreas while lower levels are found in the liver, spleen and thymus.

It is found in the secreted. Its subcellular location is the extracellular space. The enzyme catalyses Preferential cleavage: Arg-|-Xaa, Lys-|-Xaa.. The chain is Trypsin II-P29 from Gallus gallus (Chicken).